The chain runs to 508 residues: Ras association domain-containing protein 10 (508 aa).

One can recognise a Ras-associating domain in the interval 1-133 (MDPSEKKISV…VRFVLVRSEA (133 aa)). Disordered regions lie at residues 51–81 (RRGL…AMPP) and 186–221 (KLNR…ESAS). Over residues 66 to 78 (EPPDENDEDDDDA) the composition is skewed to acidic residues. The span at 195–214 (PSSPCSSTSSSTASSCSSSA) shows a compositional bias: low complexity. Coiled coils occupy residues 235 to 266 (QDHT…DRMR) and 319 to 358 (LEEL…NQRW). A disordered region spans residues 473 to 508 (GLAKSCPGNDEDSDTGLSSMHSQDSDSVPPVCESLV). A compositionally biased stretch (polar residues) spans 487-498 (TGLSSMHSQDSD).

Expressed in neural progenitor cells (at protein level).

It is found in the cytoplasm. It localises to the cytosol. Its subcellular location is the cytoskeleton. The protein resides in the microtubule organizing center. The protein localises to the centrosome. It is found in the spindle pole. Its function is as follows. Plays an important role in regulating embryonic neurogenesis. This chain is Ras association domain-containing protein 10 (Rassf10), found in Mus musculus (Mouse).